The chain runs to 155 residues: Ribosome maturation factor RimP (155 aa).

Belongs to the RimP family.

The protein localises to the cytoplasm. In terms of biological role, required for maturation of 30S ribosomal subunits. This Exiguobacterium sibiricum (strain DSM 17290 / CCUG 55495 / CIP 109462 / JCM 13490 / 255-15) protein is Ribosome maturation factor RimP.